The primary structure comprises 373 residues: Chaperone protein DnaJ (373 aa).

Residues 4–69 (SYYEILEITQ…EKRAIYDRYG (66 aa)) form the J domain. The CR-type zinc finger occupies 135–212 (GCKKNIDFTY…CKGLGYNESK (78 aa)). Positions 148, 151, 164, 167, 186, 189, 200, and 203 each coordinate Zn(2+). CXXCXGXG motif repeat units lie at residues 148-155 (CKTCNGTG), 164-171 (CPKCQGRG), 186-193 (CPDCQGIG), and 200-207 (CSDCKGLG).

The protein belongs to the DnaJ family. As to quaternary structure, homodimer. Zn(2+) serves as cofactor.

It localises to the cytoplasm. Its function is as follows. Participates actively in the response to hyperosmotic and heat shock by preventing the aggregation of stress-denatured proteins and by disaggregating proteins, also in an autonomous, DnaK-independent fashion. Unfolded proteins bind initially to DnaJ; upon interaction with the DnaJ-bound protein, DnaK hydrolyzes its bound ATP, resulting in the formation of a stable complex. GrpE releases ADP from DnaK; ATP binding to DnaK triggers the release of the substrate protein, thus completing the reaction cycle. Several rounds of ATP-dependent interactions between DnaJ, DnaK and GrpE are required for fully efficient folding. Also involved, together with DnaK and GrpE, in the DNA replication of plasmids through activation of initiation proteins. This is Chaperone protein DnaJ from Campylobacter jejuni subsp. jejuni serotype O:2 (strain ATCC 700819 / NCTC 11168).